The primary structure comprises 150 residues: D-aminoacyl-tRNA deacylase (150 aa).

The Gly-cisPro motif, important for rejection of L-amino acids signature appears at 140-141; sequence GP.

This sequence belongs to the DTD family. Homodimer.

The protein resides in the cytoplasm. The enzyme catalyses glycyl-tRNA(Ala) + H2O = tRNA(Ala) + glycine + H(+). It carries out the reaction a D-aminoacyl-tRNA + H2O = a tRNA + a D-alpha-amino acid + H(+). In terms of biological role, an aminoacyl-tRNA editing enzyme that deacylates mischarged D-aminoacyl-tRNAs. Also deacylates mischarged glycyl-tRNA(Ala), protecting cells against glycine mischarging by AlaRS. Acts via tRNA-based rather than protein-based catalysis; rejects L-amino acids rather than detecting D-amino acids in the active site. By recycling D-aminoacyl-tRNA to D-amino acids and free tRNA molecules, this enzyme counteracts the toxicity associated with the formation of D-aminoacyl-tRNA entities in vivo and helps enforce protein L-homochirality. This is D-aminoacyl-tRNA deacylase (DTD1) from Eremothecium gossypii (strain ATCC 10895 / CBS 109.51 / FGSC 9923 / NRRL Y-1056) (Yeast).